The primary structure comprises 94 residues: Integration host factor subunit beta (94 aa).

It belongs to the bacterial histone-like protein family. As to quaternary structure, heterodimer of an alpha and a beta chain.

This protein is one of the two subunits of integration host factor, a specific DNA-binding protein that functions in genetic recombination as well as in transcriptional and translational control. The chain is Integration host factor subunit beta from Roseobacter denitrificans (strain ATCC 33942 / OCh 114) (Erythrobacter sp. (strain OCh 114)).